A 391-amino-acid polypeptide reads, in one-letter code: Formate-dependent phosphoribosylglycinamide formyltransferase (391 aa).

Residues 20–21 (EL) and E80 each bind N(1)-(5-phospho-beta-D-ribosyl)glycinamide. ATP is bound by residues R112, K153, 158-163 (SSGKGQ), 193-196 (EGFV), and E201. The 190-residue stretch at 117 to 306 (RLAAETLGLP…EFALHVRAIL (190 aa)) folds into the ATP-grasp domain. Mg(2+) contacts are provided by E265 and E277. N(1)-(5-phospho-beta-D-ribosyl)glycinamide contacts are provided by residues D284, K354, and 361–362 (RR).

Belongs to the PurK/PurT family. Homodimer.

The catalysed reaction is N(1)-(5-phospho-beta-D-ribosyl)glycinamide + formate + ATP = N(2)-formyl-N(1)-(5-phospho-beta-D-ribosyl)glycinamide + ADP + phosphate + H(+). It participates in purine metabolism; IMP biosynthesis via de novo pathway; N(2)-formyl-N(1)-(5-phospho-D-ribosyl)glycinamide from N(1)-(5-phospho-D-ribosyl)glycinamide (formate route): step 1/1. In terms of biological role, involved in the de novo purine biosynthesis. Catalyzes the transfer of formate to 5-phospho-ribosyl-glycinamide (GAR), producing 5-phospho-ribosyl-N-formylglycinamide (FGAR). Formate is provided by PurU via hydrolysis of 10-formyl-tetrahydrofolate. The polypeptide is Formate-dependent phosphoribosylglycinamide formyltransferase (Shewanella sp. (strain W3-18-1)).